The following is a 156-amino-acid chain: Ribosomal RNA large subunit methyltransferase H (156 aa).

Residues Leu-73, Gly-104, and 123 to 128 (ISSMTL) each bind S-adenosyl-L-methionine.

This sequence belongs to the RNA methyltransferase RlmH family. As to quaternary structure, homodimer.

Its subcellular location is the cytoplasm. It catalyses the reaction pseudouridine(1915) in 23S rRNA + S-adenosyl-L-methionine = N(3)-methylpseudouridine(1915) in 23S rRNA + S-adenosyl-L-homocysteine + H(+). Specifically methylates the pseudouridine at position 1915 (m3Psi1915) in 23S rRNA. This chain is Ribosomal RNA large subunit methyltransferase H, found in Burkholderia lata (strain ATCC 17760 / DSM 23089 / LMG 22485 / NCIMB 9086 / R18194 / 383).